The sequence spans 88 residues: Large ribosomal subunit protein bL27 (88 aa).

The tract at residues 1–21 (MAHKKGASSSRNGRDSAAQRL) is disordered.

It belongs to the bacterial ribosomal protein bL27 family.

This is Large ribosomal subunit protein bL27 from Mycobacterium marinum (strain ATCC BAA-535 / M).